A 374-amino-acid polypeptide reads, in one-letter code: DNA integrity scanning protein DisA (374 aa).

One can recognise a DAC domain in the interval 20–158 (EALMRASLSA…DGERRVLEES (139 aa)). Residues Gly87, Leu105, and 118–122 (TRHRT) each bind ATP.

Belongs to the DisA family. In terms of assembly, homooctamer. It depends on Mg(2+) as a cofactor.

It catalyses the reaction 2 ATP = 3',3'-c-di-AMP + 2 diphosphate. In terms of biological role, participates in a DNA-damage check-point that is active prior to asymmetric division when DNA is damaged. DisA forms globular foci that rapidly scan along the chromosomes during sporulation, searching for lesions. When a lesion is present, DisA pauses at the lesion site. This triggers a cellular response that culminates in a temporary block in sporulation initiation. Its function is as follows. Also has diadenylate cyclase activity, catalyzing the condensation of 2 ATP molecules into cyclic di-AMP (c-di-AMP). c-di-AMP acts as a signaling molecule that couples DNA integrity with progression of sporulation. The rise in c-di-AMP level generated by DisA while scanning the chromosome, operates as a positive signal that advances sporulation; upon encountering a lesion, the DisA focus arrests at the damaged site and halts c-di-AMP synthesis. In Streptomyces griseus subsp. griseus (strain JCM 4626 / CBS 651.72 / NBRC 13350 / KCC S-0626 / ISP 5235), this protein is DNA integrity scanning protein DisA.